Reading from the N-terminus, the 102-residue chain is Co-chaperonin GroES (102 aa).

Belongs to the GroES chaperonin family. As to quaternary structure, heptamer of 7 subunits arranged in a ring. Interacts with the chaperonin GroEL.

Its subcellular location is the cytoplasm. Its function is as follows. Together with the chaperonin GroEL, plays an essential role in assisting protein folding. The GroEL-GroES system forms a nano-cage that allows encapsulation of the non-native substrate proteins and provides a physical environment optimized to promote and accelerate protein folding. GroES binds to the apical surface of the GroEL ring, thereby capping the opening of the GroEL channel. The protein is Co-chaperonin GroES of Chlamydia trachomatis serovar L2 (strain ATCC VR-902B / DSM 19102 / 434/Bu).